A 51-amino-acid chain; its full sequence is Large ribosomal subunit protein bL33 (51 aa).

Belongs to the bacterial ribosomal protein bL33 family.

The polypeptide is Large ribosomal subunit protein bL33 (Hahella chejuensis (strain KCTC 2396)).